The chain runs to 315 residues: MSEIRTQVQFVDIDEDMAGQRIDNFLRNQLKDIPKSMIYRIVRKGEVRVNKKRIKAEYKLKAGDLVRIPPVTVEKKEEDVAPSTKLNKVAELEHMIIYEDDHMLILNKPSGTAVHGGSGLKFGAIEALRALRPQARFLELVHRIDRDTSGILLVAKKRSALRHLQAQFREKTVKKFYFALVMGQWKSSCKVVNAPLLKNEVNSIVRVNPNGKPSETRFKILEKFEQATLIQASPITGRTHQIRVHTQYTGHPIAWDDRYGDRRFDAYTGQLGLDRLFLHAANIKFQHPSNDEWMEINAPMESKLEKVLVGLRKAN.

The 74-residue stretch at 20 to 93 (QRIDNFLRNQ…TKLNKVAELE (74 aa)) folds into the S4 RNA-binding domain. Residue aspartate 145 is part of the active site.

It belongs to the pseudouridine synthase RluA family.

The enzyme catalyses uridine(955/2504/2580) in 23S rRNA = pseudouridine(955/2504/2580) in 23S rRNA. Functionally, responsible for synthesis of pseudouridine from uracil at positions 955, 2504 and 2580 in 23S ribosomal RNA. In Vibrio parahaemolyticus serotype O3:K6 (strain RIMD 2210633), this protein is Ribosomal large subunit pseudouridine synthase C (rluC).